Reading from the N-terminus, the 206-residue chain is Guanylate kinase (206 aa).

The Guanylate kinase-like domain maps to 3 to 183; sequence GNLYILSAPS…ALTELKSILT (181 aa). 10–17 serves as a coordination point for ATP; it reads APSGAGKS.

The protein belongs to the guanylate kinase family.

The protein localises to the cytoplasm. The enzyme catalyses GMP + ATP = GDP + ADP. In terms of biological role, essential for recycling GMP and indirectly, cGMP. This chain is Guanylate kinase, found in Haemophilus ducreyi (strain 35000HP / ATCC 700724).